Here is a 413-residue protein sequence, read N- to C-terminus: Histidine--tRNA ligase (413 aa).

This sequence belongs to the class-II aminoacyl-tRNA synthetase family. Homodimer.

The protein resides in the cytoplasm. The enzyme catalyses tRNA(His) + L-histidine + ATP = L-histidyl-tRNA(His) + AMP + diphosphate + H(+). This Wolbachia sp. subsp. Brugia malayi (strain TRS) protein is Histidine--tRNA ligase.